The following is a 243-amino-acid chain: Protein unc-119 homolog B (243 aa).

Polar residues predominate over residues 1–21 (MNSQSSRNETAATAVNGSDSA). Residues 1–49 (MNSQSSRNETAATAVNGSDSAAASRDHKSGGGVLKRLKSRRNQVDRRPV) form a disordered region. Y134 contacts tetradecanoate.

This sequence belongs to the PDE6D/unc-119 family. As to expression, detected in embryo. Detected in larvae four days after fertilization, in retina and neural tissues (at protein level). Detected in embryos at the sphere stage, during gastrulation, somitogenesis and in swimming larvae, both within and outside of the developing nervous system. Detected in adults.

It localises to the cell projection. The protein resides in the cilium. In terms of biological role, myristoyl-binding protein that acts as a cargo adapter: specifically binds the myristoyl moiety of a subset of N-terminally myristoylated proteins and is required for their localization. Plays a key role in localization of proteins to the primary cilium membrane. The polypeptide is Protein unc-119 homolog B (unc119b) (Danio rerio (Zebrafish)).